The chain runs to 648 residues: Mitochondrial Rho GTPase 3 (648 aa).

Residues Met-1–Ser-621 lie on the Cytoplasmic side of the membrane. Ser-11 bears the Phosphoserine mark. Residues Pro-12 to Asp-179 enclose the Miro 1 domain. 2 consecutive EF-hand domains span residues Arg-195–Thr-230 and Val-316–Ser-351. Positions 208, 210, 212, 219, 329, 331, 333, 335, and 340 each coordinate Ca(2+). One can recognise a Miro 2 domain in the interval Arg-425–Asn-599. Residues Leu-622–Ala-644 form a helical membrane-spanning segment. The Mitochondrial intermembrane portion of the chain corresponds to Arg-645–Ser-648.

The protein belongs to the mitochondrial Rho GTPase family. In terms of tissue distribution, expressed at very low levels in roots, leaves, stems, flowers and siliques.

It localises to the mitochondrion outer membrane. Its function is as follows. Mitochondrial GTPase that may be involved in mitochondrion development. This Arabidopsis thaliana (Mouse-ear cress) protein is Mitochondrial Rho GTPase 3.